Here is a 396-residue protein sequence, read N- to C-terminus: Acetyl-CoA acetyltransferase ERG10, cytosolic (396 aa).

Cys-91 acts as the Acyl-thioester intermediate in catalysis. Tyr-186 provides a ligand contact to K(+). Residues Asn-227 and Lys-230 each coordinate CoA. K(+)-binding residues include Ala-246, Pro-247, and Val-347. Catalysis depends on proton acceptor residues His-351 and Cys-381. Asn-382 contributes to the chloride binding site.

The protein belongs to the thiolase-like superfamily. Thiolase family. In terms of assembly, homotetramer. Requires K(+) as cofactor.

The protein localises to the cytoplasm. Its subcellular location is the cytosol. The enzyme catalyses 2 acetyl-CoA = acetoacetyl-CoA + CoA. It functions in the pathway metabolic intermediate biosynthesis; (R)-mevalonate biosynthesis; (R)-mevalonate from acetyl-CoA: step 1/3. Functionally, acetyl-CoA acetyltransferase; part of the first module of ergosterol biosynthesis pathway that includes the early steps of the pathway, conserved across all eukaryotes, and which results in the formation of mevalonate from acetyl-coenzyme A (acetyl-CoA). ERG10B catalyzes the formation of acetoacetyl-CoA from acetyl-CoA. The first module starts with the action of the cytosolic acetyl-CoA acetyltransferase ERG10B that catalyzes the formation of acetoacetyl-CoA. The hydroxymethylglutaryl-CoA synthases ERG13 then condenses acetyl-CoA with acetoacetyl-CoA to form HMG-CoA. The rate-limiting step of the early module is the reduction to mevalonate by the 3-hydroxy-3-methylglutaryl-coenzyme A (HMG-CoA) reductases HMG1. This chain is Acetyl-CoA acetyltransferase ERG10, cytosolic, found in Gibberella zeae (strain ATCC MYA-4620 / CBS 123657 / FGSC 9075 / NRRL 31084 / PH-1) (Wheat head blight fungus).